Here is a 272-residue protein sequence, read N- to C-terminus: Shikimate dehydrogenase (NADP(+)) (272 aa).

Shikimate contacts are provided by residues 16 to 18 (SLS) and threonine 63. The active-site Proton acceptor is the lysine 67. NADP(+) is bound at residue glutamate 79. The shikimate site is built by asparagine 88 and aspartate 103. NADP(+) is bound by residues 127 to 131 (GAGGA), 151 to 156 (NRTMSR), and isoleucine 212. Tyrosine 214 contributes to the shikimate binding site. Glycine 235 lines the NADP(+) pocket.

Belongs to the shikimate dehydrogenase family. In terms of assembly, homodimer.

It carries out the reaction shikimate + NADP(+) = 3-dehydroshikimate + NADPH + H(+). Its pathway is metabolic intermediate biosynthesis; chorismate biosynthesis; chorismate from D-erythrose 4-phosphate and phosphoenolpyruvate: step 4/7. Involved in the biosynthesis of the chorismate, which leads to the biosynthesis of aromatic amino acids. Catalyzes the reversible NADPH linked reduction of 3-dehydroshikimate (DHSA) to yield shikimate (SA). This is Shikimate dehydrogenase (NADP(+)) from Staphylococcus epidermidis (strain ATCC 12228 / FDA PCI 1200).